The sequence spans 106 residues: uncharacterized protein (106 aa).

Helical transmembrane passes span 46 to 68 (LLQE…ILAF) and 73 to 92 (AVFI…LIAA).

It is found in the cell membrane. This is an uncharacterized protein from Bacillus subtilis (strain 168).